We begin with the raw amino-acid sequence, 256 residues long: Phosphoribosylaminoimidazole-succinocarboxamide synthase (256 aa).

It belongs to the SAICAR synthetase family.

The enzyme catalyses 5-amino-1-(5-phospho-D-ribosyl)imidazole-4-carboxylate + L-aspartate + ATP = (2S)-2-[5-amino-1-(5-phospho-beta-D-ribosyl)imidazole-4-carboxamido]succinate + ADP + phosphate + 2 H(+). The protein operates within purine metabolism; IMP biosynthesis via de novo pathway; 5-amino-1-(5-phospho-D-ribosyl)imidazole-4-carboxamide from 5-amino-1-(5-phospho-D-ribosyl)imidazole-4-carboxylate: step 1/2. The polypeptide is Phosphoribosylaminoimidazole-succinocarboxamide synthase (Synechococcus sp. (strain JA-3-3Ab) (Cyanobacteria bacterium Yellowstone A-Prime)).